Consider the following 859-residue polypeptide: Valine--tRNA ligase (859 aa).

The short motif at 46–56 (PTVSGQLHIGH) is the 'HIGH' region element. Positions 583–587 (KMSKS) match the 'KMSKS' region motif. Lysine 586 lines the ATP pocket.

It belongs to the class-I aminoacyl-tRNA synthetase family. ValS type 2 subfamily. Monomer.

The protein localises to the cytoplasm. It catalyses the reaction tRNA(Val) + L-valine + ATP = L-valyl-tRNA(Val) + AMP + diphosphate. Functionally, catalyzes the attachment of valine to tRNA(Val). As ValRS can inadvertently accommodate and process structurally similar amino acids such as threonine, to avoid such errors, it has a 'posttransfer' editing activity that hydrolyzes mischarged Thr-tRNA(Val) in a tRNA-dependent manner. This is Valine--tRNA ligase from Rickettsia felis (strain ATCC VR-1525 / URRWXCal2) (Rickettsia azadi).